Here is a 605-residue protein sequence, read N- to C-terminus: Pyruvate decarboxylase 1 (605 aa).

2 residues coordinate substrate: aspartate 67 and histidine 154. The thiamine pyrophosphate binding stretch occupies residues 432 to 514 (DSWFNCQKLR…FLINNGGYTI (83 aa)). Residues aspartate 482, asparagine 509, and glycine 511 each coordinate Mg(2+). Glutamate 515 serves as a coordination point for substrate.

It belongs to the TPP enzyme family. As to quaternary structure, homotetramer. Requires a metal cation as cofactor. Thiamine diphosphate serves as cofactor.

The enzyme catalyses a 2-oxocarboxylate + H(+) = an aldehyde + CO2. This chain is Pyruvate decarboxylase 1 (PDC1), found in Oryza sativa subsp. indica (Rice).